We begin with the raw amino-acid sequence, 151 residues long: Transcriptional repressor NrdR (151 aa).

The segment at 3–34 (CPYCAYGESKVVDSRSTEDGSSIRRRRECLKC) is a zinc-finger region. One can recognise an ATP-cone domain in the interval 49–139 (ILVIKKNMSR…VYRQFKDINT (91 aa)).

It belongs to the NrdR family. Zn(2+) is required as a cofactor.

Functionally, negatively regulates transcription of bacterial ribonucleotide reductase nrd genes and operons by binding to NrdR-boxes. This Clostridium botulinum (strain Loch Maree / Type A3) protein is Transcriptional repressor NrdR.